A 298-amino-acid chain; its full sequence is Acetylglutamate kinase (298 aa).

Residues Gly-69–Gly-70, Arg-91, and Asn-196 contribute to the substrate site.

It belongs to the acetylglutamate kinase family. ArgB subfamily.

The protein resides in the cytoplasm. The enzyme catalyses N-acetyl-L-glutamate + ATP = N-acetyl-L-glutamyl 5-phosphate + ADP. It functions in the pathway amino-acid biosynthesis; L-arginine biosynthesis; N(2)-acetyl-L-ornithine from L-glutamate: step 2/4. Its function is as follows. Catalyzes the ATP-dependent phosphorylation of N-acetyl-L-glutamate. The chain is Acetylglutamate kinase from Bradyrhizobium sp. (strain ORS 278).